The chain runs to 493 residues: Tripartite motif-containing protein 5 (493 aa).

Residue Ala-2 is modified to N-acetylalanine. An RING-type zinc finger spans residues 15–59 (CPICLELLTQPLSLDCGHSFCQACLTANHKKSMLDKGESSCPVCR). Ser-86 carries the post-translational modification Phosphoserine. A B box-type zinc finger spans residues 90–132 (QKVDHCARHGEKLLLFCQEDGKVICWLCERSQEHRGHHTFLTE). Positions 95, 98, 117, and 123 each coordinate Zn(2+). Residues 131-240 (TEEVAREYQV…LISDLERRLQ (110 aa)) adopt a coiled-coil conformation. The tract at residues 185–198 (FEQLRDILDWEESN) is required for interaction with GABARAP and for autophagy. One can recognise a B30.2/SPRY domain in the interval 281–493 (LKGMLEVFRE…VPMTLCSPSS (213 aa)).

This sequence belongs to the TRIM/RBCC family. In terms of assembly, can form homodimers and homotrimers. In addition to lower-order dimerization, also exhibits a higher-order multimerization and both low- and high-order multimerizations are essential for its restriction activity. Interacts with BTBD1 and BTBD2. Interacts with PSMC4, PSMC5, PSMD7 and HSPA8/HSC70. Interacts (via B30.2/SPRY domain) with HSPA1A/B. Interacts with PSMC2, MAP3K7/TAK1, TAB2 and TAB3. Interacts with SQSTM1. Interacts with TRIM6 and TRIM34. Interacts with ULK1 (phosphorylated form), GABARAP, GABARAPL1, GABARAPL2, MAP1LC3A, MAP1LC3C and BECN1. Degraded in a proteasome-independent fashion in the absence of viral infection but in a proteasome-dependent fashion following exposure to restriction sensitive virus. In terms of processing, autoubiquitinated in a RING finger- and UBE2D2-dependent manner. Monoubiquitinated by TRIM21. Deubiquitinated by Yersinia YopJ. Ubiquitination may not lead to proteasomal degradation.

It localises to the cytoplasm. It is found in the nucleus. It carries out the reaction S-ubiquitinyl-[E2 ubiquitin-conjugating enzyme]-L-cysteine + [acceptor protein]-L-lysine = [E2 ubiquitin-conjugating enzyme]-L-cysteine + N(6)-ubiquitinyl-[acceptor protein]-L-lysine.. It participates in protein modification; protein ubiquitination. Capsid-specific restriction factor that prevents infection from non-host-adapted retroviruses. Blocks viral replication early in the life cycle, after viral entry but before reverse transcription. In addition to acting as a capsid-specific restriction factor, also acts as a pattern recognition receptor that activates innate immune signaling in response to the retroviral capsid lattice. Binding to the viral capsid triggers its E3 ubiquitin ligase activity, and in concert with the heterodimeric ubiquitin conjugating enzyme complex UBE2V1-UBE2N (also known as UBC13-UEV1A complex) generates 'Lys-63'-linked polyubiquitin chains, which in turn are catalysts in the autophosphorylation of the MAP3K7/TAK1 complex (includes TAK1, TAB2, and TAB3). Activation of the MAP3K7/TAK1 complex by autophosphorylation results in the induction and expression of NF-kappa-B and MAPK-responsive inflammatory genes, thereby leading to an innate immune response in the infected cell. Plays a role in regulating autophagy through activation of autophagy regulator BECN1 by causing its dissociation from its inhibitors BCL2 and TAB2. The polypeptide is Tripartite motif-containing protein 5 (TRIM5) (Pan paniscus (Pygmy chimpanzee)).